Reading from the N-terminus, the 360-residue chain is Phospho-N-acetylmuramoyl-pentapeptide-transferase (360 aa).

10 helical membrane passes run 21-41 (YITF…LWIG), 73-93 (TMGG…WADL), 98-118 (VWFV…DDYW), 132-152 (WKYF…YAVG), 168-188 (FMPQ…VGTS), 199-219 (GLAI…AWAT), 236-256 (AGEL…FLWY), 263-283 (VFMG…IAVL), 288-308 (LLLV…ILQV), and 338-358 (VIVR…VTLK).

It belongs to the glycosyltransferase 4 family. MraY subfamily. The cofactor is Mg(2+).

Its subcellular location is the cell inner membrane. The catalysed reaction is UDP-N-acetyl-alpha-D-muramoyl-L-alanyl-gamma-D-glutamyl-meso-2,6-diaminopimeloyl-D-alanyl-D-alanine + di-trans,octa-cis-undecaprenyl phosphate = di-trans,octa-cis-undecaprenyl diphospho-N-acetyl-alpha-D-muramoyl-L-alanyl-D-glutamyl-meso-2,6-diaminopimeloyl-D-alanyl-D-alanine + UMP. It participates in cell wall biogenesis; peptidoglycan biosynthesis. Catalyzes the initial step of the lipid cycle reactions in the biosynthesis of the cell wall peptidoglycan: transfers peptidoglycan precursor phospho-MurNAc-pentapeptide from UDP-MurNAc-pentapeptide onto the lipid carrier undecaprenyl phosphate, yielding undecaprenyl-pyrophosphoryl-MurNAc-pentapeptide, known as lipid I. The chain is Phospho-N-acetylmuramoyl-pentapeptide-transferase from Actinobacillus pleuropneumoniae serotype 3 (strain JL03).